Reading from the N-terminus, the 1129-residue chain is Ubiquitin carboxyl-terminal hydrolase 7 (1129 aa).

One can recognise an MATH domain in the interval Glu-29 to Phe-169. Positions Ile-190 to Asp-500 constitute a USP domain. Cys-199 functions as the Nucleophile in the catalytic mechanism. His-439 serves as the catalytic Proton acceptor.

It belongs to the peptidase C19 family.

It localises to the nucleus. The enzyme catalyses Thiol-dependent hydrolysis of ester, thioester, amide, peptide and isopeptide bonds formed by the C-terminal Gly of ubiquitin (a 76-residue protein attached to proteins as an intracellular targeting signal).. Hydrolase that deubiquitinates target proteins. In Caenorhabditis briggsae, this protein is Ubiquitin carboxyl-terminal hydrolase 7.